Consider the following 909-residue polypeptide: Disintegrin and metalloproteinase domain-containing protein 12 (909 aa).

Residues Met1–Ala28 form the signal peptide. A propeptide spanning residues Arg29–Arg207 is cleaved from the precursor. N-linked (GlcNAc...) asparagine glycosylation is found at Asn111 and Asn149. Positions Gly177–Asn184 match the Cysteine switch motif. 2 residues coordinate Zn(2+): Cys179 and His350. Residues Glu208–Gly708 lie on the Extracellular side of the membrane. The region spanning Lys214–Pro416 is the Peptidase M12B domain. 3 cysteine pairs are disulfide-bonded: Cys325–Cys411, Cys367–Cys395, and Cys369–Cys378. The active site involves Glu351. Zn(2+) is bound by residues His354 and His360. 2 N-linked (GlcNAc...) asparagine glycosylation sites follow: Asn381 and Asn452. Residues Gly424 to Asp510 form the Disintegrin domain. A disulfide bridge connects residues Cys482 and Cys502. N-linked (GlcNAc...) asparagine glycosylation is present at Asn651. The EGF-like domain occupies Gly656–Asp688. Cystine bridges form between Cys660/Cys670, Cys664/Cys676, and Cys678/Cys687. The helical transmembrane segment at Leu709 to Leu729 threads the bilayer. Topologically, residues Lys730 to Lys909 are cytoplasmic. The segment at Leu822–Pro862 is disordered. The short motif at Ala828 to Arg834 is the SH3-binding; class II element. An SH3-binding; class I motif is present at residues Arg834–Ala841. The span at Pro851 to Ala860 shows a compositional bias: pro residues. The SH3-binding; class I signature appears at Arg885–Pro891. Position 907 is a phosphotyrosine; by SRC (Tyr907).

As to quaternary structure, interacts with alpha-actinin-2 and with syndecans. Interacts with SH3PXD2A. Interacts with FST3. Interacts with RACK1; the interaction is required for PKC-dependent translocation of ADAM12 to the cell membrane. It depends on Zn(2+) as a cofactor. Post-translationally, the precursor is cleaved by a furin endopeptidase. As to expression, isoform 1 is expressed in placenta and skeletal, cardiac, and smooth muscle. Isoform 2 seems to be expressed only in placenta or in embryo and fetus. Both forms were expressed in some tumor cells lines. Not detected in brain, lung, liver, kidney or pancreas.

The protein localises to the cell membrane. Its subcellular location is the secreted. Functionally, involved in skeletal muscle regeneration, specifically at the onset of cell fusion. Also involved in macrophage-derived giant cells (MGC) and osteoclast formation from mononuclear precursors. This Homo sapiens (Human) protein is Disintegrin and metalloproteinase domain-containing protein 12 (ADAM12).